A 1442-amino-acid chain; its full sequence is DNA polymerase III PolC-type (1442 aa).

The Exonuclease domain maps to Tyr-426–Phe-582.

Belongs to the DNA polymerase type-C family. PolC subfamily.

It is found in the cytoplasm. The catalysed reaction is DNA(n) + a 2'-deoxyribonucleoside 5'-triphosphate = DNA(n+1) + diphosphate. In terms of biological role, required for replicative DNA synthesis. This DNA polymerase also exhibits 3' to 5' exonuclease activity. The protein is DNA polymerase III PolC-type of Staphylococcus epidermidis (strain ATCC 12228 / FDA PCI 1200).